A 68-amino-acid polypeptide reads, in one-letter code: Neuronal regeneration-related protein (68 aa).

This chain is Neuronal regeneration-related protein (NREP), found in Gallus gallus (Chicken).